The primary structure comprises 246 residues: Alpha-tubulin N-acetyltransferase (246 aa).

The N-acetyltransferase domain occupies Leu-21–Phe-202. Acetyl-CoA contacts are provided by residues Phe-135–Lys-148 and Ser-172–Lys-181.

This sequence belongs to the acetyltransferase ATAT1 family.

The catalysed reaction is L-lysyl-[alpha-tubulin] + acetyl-CoA = N(6)-acetyl-L-lysyl-[alpha-tubulin] + CoA + H(+). Functionally, specifically acetylates 'Lys-40' in alpha-tubulin on the lumenal side of microtubules. Promotes microtubule destabilization and accelerates microtubule dynamics; this activity may be independent of acetylation activity. Acetylates alpha-tubulin with a slow enzymatic rate, due to a catalytic site that is not optimized for acetyl transfer. Enters the microtubule through each end and diffuses quickly throughout the lumen of microtubules. Acetylates only long/old microtubules because of its slow acetylation rate since it does not have time to act on dynamically unstable microtubules before the enzyme is released. In Leishmania infantum, this protein is Alpha-tubulin N-acetyltransferase.